We begin with the raw amino-acid sequence, 401 residues long: Argininosuccinate synthase (401 aa).

Position 8 to 16 (8 to 16 (AYSGGLDTT)) interacts with ATP. Residue tyrosine 87 participates in L-citrulline binding. Glycine 117 provides a ligand contact to ATP. The L-aspartate site is built by threonine 119, asparagine 123, and aspartate 124. Asparagine 123 lines the L-citrulline pocket. 4 residues coordinate L-citrulline: arginine 127, serine 175, glutamate 259, and tyrosine 271.

It belongs to the argininosuccinate synthase family. Type 1 subfamily. In terms of assembly, homotetramer.

The protein resides in the cytoplasm. The enzyme catalyses L-citrulline + L-aspartate + ATP = 2-(N(omega)-L-arginino)succinate + AMP + diphosphate + H(+). The protein operates within amino-acid biosynthesis; L-arginine biosynthesis; L-arginine from L-ornithine and carbamoyl phosphate: step 2/3. The chain is Argininosuccinate synthase from Corynebacterium glutamicum (strain ATCC 13032 / DSM 20300 / JCM 1318 / BCRC 11384 / CCUG 27702 / LMG 3730 / NBRC 12168 / NCIMB 10025 / NRRL B-2784 / 534).